The sequence spans 305 residues: tRNA pseudouridine synthase B (305 aa).

D48 functions as the Nucleophile in the catalytic mechanism.

It belongs to the pseudouridine synthase TruB family. Type 1 subfamily.

The enzyme catalyses uridine(55) in tRNA = pseudouridine(55) in tRNA. Responsible for synthesis of pseudouridine from uracil-55 in the psi GC loop of transfer RNAs. The polypeptide is tRNA pseudouridine synthase B (Pseudomonas syringae pv. syringae (strain B728a)).